Reading from the N-terminus, the 308-residue chain is MHKDDILKELKAIVPEEIIKIDEPLKKYTYTQTGGKADYYLSPTHNEHVQAIVHYAYTHDIPVTYLGNGSNIIIREGGIRGIVISLLSLDYIDVSDDAIISGSGAAIIDVSRAARDHGLTGLEFACGIPGSIGGAVFMNAGAYGGEVKDCIDYALCVNNKGELITLTNKELELDYRNSIVQKEHLVVLEAAFTLAPGDQQEIQASMDDLTERRESKQPLEYPSCGSVFQRPPGHFAGKLIQDAHLQGHRIGGVEVSTKHAGFMVNVDKGTATDYEDLIHYVQKIVQEKFDVELHPEVRIIGEHPLNEQ.

An FAD-binding PCMH-type domain is found at 32–197 (QTGGKADYYL…LEAAFTLAPG (166 aa)). The active site involves Arg176. Catalysis depends on Ser226, which acts as the Proton donor. Glu296 is an active-site residue.

Belongs to the MurB family. Requires FAD as cofactor.

It is found in the cytoplasm. The enzyme catalyses UDP-N-acetyl-alpha-D-muramate + NADP(+) = UDP-N-acetyl-3-O-(1-carboxyvinyl)-alpha-D-glucosamine + NADPH + H(+). It participates in cell wall biogenesis; peptidoglycan biosynthesis. Functionally, cell wall formation. This Staphylococcus saprophyticus subsp. saprophyticus (strain ATCC 15305 / DSM 20229 / NCIMB 8711 / NCTC 7292 / S-41) protein is UDP-N-acetylenolpyruvoylglucosamine reductase.